A 343-amino-acid polypeptide reads, in one-letter code: Methionine import ATP-binding protein MetN 1 (343 aa).

Positions Ile-2 to Ile-241 constitute an ABC transporter domain. Position 38 to 45 (Gly-38 to Ser-45) interacts with ATP.

It belongs to the ABC transporter superfamily. Methionine importer (TC 3.A.1.24) family. The complex is composed of two ATP-binding proteins (MetN), two transmembrane proteins (MetI) and a solute-binding protein (MetQ).

It is found in the cell inner membrane. It carries out the reaction L-methionine(out) + ATP + H2O = L-methionine(in) + ADP + phosphate + H(+). It catalyses the reaction D-methionine(out) + ATP + H2O = D-methionine(in) + ADP + phosphate + H(+). In terms of biological role, part of the ABC transporter complex MetNIQ involved in methionine import. Responsible for energy coupling to the transport system. In Salmonella typhi, this protein is Methionine import ATP-binding protein MetN 1.